The following is a 448-amino-acid chain: Trigger factor (448 aa).

In terms of domain architecture, PPIase FKBP-type spans 173-258 (SDRVTIDFVG…LKQIEWAHMP (86 aa)).

This sequence belongs to the FKBP-type PPIase family. Tig subfamily.

The protein localises to the cytoplasm. It catalyses the reaction [protein]-peptidylproline (omega=180) = [protein]-peptidylproline (omega=0). Its function is as follows. Involved in protein export. Acts as a chaperone by maintaining the newly synthesized protein in an open conformation. Functions as a peptidyl-prolyl cis-trans isomerase. The protein is Trigger factor of Herminiimonas arsenicoxydans.